The sequence spans 185 residues: Ribosome-recycling factor (185 aa).

Belongs to the RRF family.

The protein localises to the cytoplasm. In terms of biological role, responsible for the release of ribosomes from messenger RNA at the termination of protein biosynthesis. May increase the efficiency of translation by recycling ribosomes from one round of translation to another. The sequence is that of Ribosome-recycling factor from Pseudomonas entomophila (strain L48).